The following is a 700-amino-acid chain: Elongation factor G (700 aa).

The tr-type G domain occupies Asp-8–Leu-290. GTP contacts are provided by residues Ala-17–Thr-24, Asp-88–His-92, and Asn-142–Asp-145.

It belongs to the TRAFAC class translation factor GTPase superfamily. Classic translation factor GTPase family. EF-G/EF-2 subfamily.

It is found in the cytoplasm. In terms of biological role, catalyzes the GTP-dependent ribosomal translocation step during translation elongation. During this step, the ribosome changes from the pre-translocational (PRE) to the post-translocational (POST) state as the newly formed A-site-bound peptidyl-tRNA and P-site-bound deacylated tRNA move to the P and E sites, respectively. Catalyzes the coordinated movement of the two tRNA molecules, the mRNA and conformational changes in the ribosome. The polypeptide is Elongation factor G (Polynucleobacter necessarius subsp. necessarius (strain STIR1)).